The sequence spans 133 residues: Ribosome-binding factor A (133 aa).

The protein belongs to the RbfA family. As to quaternary structure, monomer. Binds 30S ribosomal subunits, but not 50S ribosomal subunits or 70S ribosomes.

It localises to the cytoplasm. Functionally, one of several proteins that assist in the late maturation steps of the functional core of the 30S ribosomal subunit. Associates with free 30S ribosomal subunits (but not with 30S subunits that are part of 70S ribosomes or polysomes). Required for efficient processing of 16S rRNA. May interact with the 5'-terminal helix region of 16S rRNA. The protein is Ribosome-binding factor A of Proteus mirabilis (strain HI4320).